The primary structure comprises 101 residues: Small ribosomal subunit protein cS23 (101 aa).

The protein belongs to the chloroplast-specific ribosomal protein cS23 family. Part of the 30S ribosomal subunit.

It localises to the plastid. The protein resides in the chloroplast. Its function is as follows. Probably a ribosomal protein or a ribosome-associated protein. The sequence is that of Small ribosomal subunit protein cS23 (ycf65) from Euglena mutabilis.